The sequence spans 333 residues: Transaldolase (333 aa).

Lys-135 functions as the Schiff-base intermediate with substrate in the catalytic mechanism.

It belongs to the transaldolase family. Type 1 subfamily. Homodimer.

It is found in the cytoplasm. The catalysed reaction is D-sedoheptulose 7-phosphate + D-glyceraldehyde 3-phosphate = D-erythrose 4-phosphate + beta-D-fructose 6-phosphate. Its pathway is carbohydrate degradation; pentose phosphate pathway; D-glyceraldehyde 3-phosphate and beta-D-fructose 6-phosphate from D-ribose 5-phosphate and D-xylulose 5-phosphate (non-oxidative stage): step 2/3. In terms of biological role, transaldolase is important for the balance of metabolites in the pentose-phosphate pathway. This is Transaldolase from Prochlorococcus marinus (strain MIT 9312).